The sequence spans 320 residues: 1-aminocyclopropane-1-carboxylate oxidase 3 (320 aa).

Positions 111–131 form a coiled coil; that stretch reads NEYRLAMKDFGKRLEILAEEL. The Fe2OG dioxygenase domain maps to 155 to 256; it reads GPTFATKLSN…RMSIASFYNP (102 aa). 3 residues coordinate Fe cation: His180, Asp182, and His237. Arg247 contacts 2-oxoglutarate.

This sequence belongs to the iron/ascorbate-dependent oxidoreductase family. Requires Fe(2+) as cofactor.

It catalyses the reaction 1-aminocyclopropane-1-carboxylate + L-ascorbate + O2 = ethene + L-dehydroascorbate + hydrogen cyanide + CO2 + 2 H2O. The protein operates within alkene biosynthesis; ethylene biosynthesis via S-adenosyl-L-methionine; ethylene from S-adenosyl-L-methionine: step 2/2. In terms of biological role, enzyme involved in the ethylene biosynthesis. May promote stem elongation by maximizing the extensibility cells, possibly by activating ethylene biosynthesis, in response to very-long-chain fatty acids (VLCFAs C20:0 to C30:0). This is 1-aminocyclopropane-1-carboxylate oxidase 3 from Arabidopsis thaliana (Mouse-ear cress).